The primary structure comprises 819 residues: Leucine--tRNA ligase (819 aa).

A 'HIGH' region motif is present at residues 42-53 (PYPSGAKLHIGH). The 'KMSKS' region motif lies at 578–582 (RMSKS). Residue Lys581 participates in ATP binding.

Belongs to the class-I aminoacyl-tRNA synthetase family.

Its subcellular location is the cytoplasm. The enzyme catalyses tRNA(Leu) + L-leucine + ATP = L-leucyl-tRNA(Leu) + AMP + diphosphate. The polypeptide is Leucine--tRNA ligase (Caldanaerobacter subterraneus subsp. tengcongensis (strain DSM 15242 / JCM 11007 / NBRC 100824 / MB4) (Thermoanaerobacter tengcongensis)).